A 565-amino-acid chain; its full sequence is Thiol:disulfide interchange protein DsbD (565 aa).

The N-terminal stretch at 1–19 is a signal peptide; the sequence is MAQRIFTLILLLCSTSVFA. Residues 20–162 lie on the Periplasmic side of the membrane; the sequence is GLFDAPGRSQ…VPQQEQPTAQ (143 aa). Disulfide bonds link Cys-122–Cys-128 and Cys-182–Cys-304. Residues 163–183 form a helical membrane-spanning segment; the sequence is LPFSALWALLIGIGIAFTPCV. Topologically, residues 184–207 are cytoplasmic; it reads LPMYPLISGIVLGGKQRLSTARAL. The chain crosses the membrane as a helical span at residues 208–228; it reads LLTFIYVQGMALTYTALGLVV. Topologically, residues 229–242 are periplasmic; that stretch reads AAAGLQFQAALQHP. Residues 243-263 form a helical membrane-spanning segment; sequence YVLIGLTIVFTLLAMSMFGLL. At 264 to 295 the chain is on the cytoplasmic side; sequence TLQLPSSLQTRLTLMSNRQQGGSPGGVFIMGT. Residues 296 to 316 form a helical membrane-spanning segment; that stretch reads IAGLICSPCTTAPLSAILLYI. At 317–322 the chain is on the periplasmic side; that stretch reads AQSGNM. A helical transmembrane segment spans residues 323–343; sequence WLGGGTLYLYALGMGLPLMLI. Over 344–356 the chain is Cytoplasmic; the sequence is TVFGNRLLPKSGP. The helical transmembrane segment at 357–377 threads the bilayer; sequence WMEQVKTAFGFVILALPVFLL. Over 378-383 the chain is Periplasmic; it reads ERVIGD. A helical transmembrane segment spans residues 384–404; it reads VWGLRLWSALGVAFFGWAFIT. The Cytoplasmic segment spans residues 405 to 417; the sequence is SLQAKRGWMRVVQ. Residues 418 to 438 form a helical membrane-spanning segment; the sequence is IILLAAALVSVRPLQDWAFGA. Residues 434–565 form the Thioredoxin domain; it reads WAFGATHTAQ…FSAHLRDRQP (132 aa). Residues 439-565 are Periplasmic-facing; it reads THTAQTQTHL…FSAHLRDRQP (127 aa). Cys-480 and Cys-483 are joined by a disulfide.

It belongs to the thioredoxin family. DsbD subfamily.

Its subcellular location is the cell inner membrane. The enzyme catalyses [protein]-dithiol + NAD(+) = [protein]-disulfide + NADH + H(+). The catalysed reaction is [protein]-dithiol + NADP(+) = [protein]-disulfide + NADPH + H(+). Functionally, required to facilitate the formation of correct disulfide bonds in some periplasmic proteins and for the assembly of the periplasmic c-type cytochromes. Acts by transferring electrons from cytoplasmic thioredoxin to the periplasm. This transfer involves a cascade of disulfide bond formation and reduction steps. The protein is Thiol:disulfide interchange protein DsbD of Escherichia coli O157:H7.